We begin with the raw amino-acid sequence, 224 residues long: Phosphoribosylformylglycinamidine synthase subunit PurQ (224 aa).

The 223-residue stretch at 2–224 (KIAVIVFPGS…SLLEEGKVKG (223 aa)) folds into the Glutamine amidotransferase type-1 domain. The active-site Nucleophile is the cysteine 86. Active-site residues include histidine 195 and glutamate 197.

Part of the FGAM synthase complex composed of 1 PurL, 1 PurQ and 2 PurS subunits.

The protein resides in the cytoplasm. It carries out the reaction N(2)-formyl-N(1)-(5-phospho-beta-D-ribosyl)glycinamide + L-glutamine + ATP + H2O = 2-formamido-N(1)-(5-O-phospho-beta-D-ribosyl)acetamidine + L-glutamate + ADP + phosphate + H(+). The enzyme catalyses L-glutamine + H2O = L-glutamate + NH4(+). It functions in the pathway purine metabolism; IMP biosynthesis via de novo pathway; 5-amino-1-(5-phospho-D-ribosyl)imidazole from N(2)-formyl-N(1)-(5-phospho-D-ribosyl)glycinamide: step 1/2. Its function is as follows. Part of the phosphoribosylformylglycinamidine synthase complex involved in the purines biosynthetic pathway. Catalyzes the ATP-dependent conversion of formylglycinamide ribonucleotide (FGAR) and glutamine to yield formylglycinamidine ribonucleotide (FGAM) and glutamate. The FGAM synthase complex is composed of three subunits. PurQ produces an ammonia molecule by converting glutamine to glutamate. PurL transfers the ammonia molecule to FGAR to form FGAM in an ATP-dependent manner. PurS interacts with PurQ and PurL and is thought to assist in the transfer of the ammonia molecule from PurQ to PurL. The sequence is that of Phosphoribosylformylglycinamidine synthase subunit PurQ from Ligilactobacillus salivarius (strain UCC118) (Lactobacillus salivarius).